The following is a 441-amino-acid chain: Phenylalanine-4-hydroxylase (441 aa).

The ACT domain occupies 23–102; the sequence is FSISKGSDKI…KATTLQESSN (80 aa). Fe cation-binding residues include H273, H278, and E318.

It belongs to the biopterin-dependent aromatic amino acid hydroxylase family. Homotetramer. Fe(2+) is required as a cofactor.

The catalysed reaction is (6R)-L-erythro-5,6,7,8-tetrahydrobiopterin + L-phenylalanine + O2 = (4aS,6R)-4a-hydroxy-L-erythro-5,6,7,8-tetrahydrobiopterin + L-tyrosine. It catalyses the reaction (6R)-L-erythro-5,6,7,8-tetrahydrobiopterin + L-tryptophan + O2 = 5-hydroxy-L-tryptophan + (4aS,6R)-4a-hydroxy-L-erythro-5,6,7,8-tetrahydrobiopterin. It functions in the pathway amino-acid degradation; L-phenylalanine degradation; acetoacetate and fumarate from L-phenylalanine: step 1/6. Catalyzes the hydroxylation of L-phenylalanine. Hydroxylates L-tryptophan to 5-hydroxy-L-tryptophan but does not hydroxylate L-tyrosine to L-DOPA. It uses D-threo-tetrahydrodictyopterin (DH4), also known as dictyoperin, as a cofactor. The sequence is that of Phenylalanine-4-hydroxylase (pah) from Dictyostelium discoideum (Social amoeba).